The following is an 808-amino-acid chain: DNA replication licensing factor MCM3 (808 aa).

N-acetylalanine is present on alanine 2. A phosphoserine mark is found at serine 160 and serine 275. Position 293 is an N6-acetyllysine (lysine 293). Residues 295–502 enclose the MCM domain; it reads IFDQLARSLA…QDREISDHVL (208 aa). The ADP site is built by glutamine 353, leucine 393, glutamate 394, alanine 395, and alanine 397. Positions 477 to 480 match the Arginine finger motif; sequence SRFD. Residue alanine 523 participates in ATP binding. Serine 535 bears the Phosphoserine; by ATM mark. Lysine 547 carries the post-translational modification N6-acetyllysine. A Phosphoserine modification is found at serine 611. The disordered stretch occupies residues 662-739; it reads KKRKKRSEDE…ETKESQKVEL (78 aa). ATP is bound at residue arginine 664. Phosphoserine is present on residues serine 668, serine 672, and serine 681. Residues 679–688 show a composition bias toward basic and acidic residues; it reads EKSQEDQEQK. Tyrosine 708 is modified (phosphotyrosine). Residues threonine 713 and threonine 722 each carry the phosphothreonine modification. Residues 727–739 are compositionally biased toward basic and acidic residues; sequence DSQETKESQKVEL. Phosphoserine is present on residues serine 728 and serine 734.

Belongs to the MCM family. In terms of assembly, component of the MCM2-7 complex. The complex forms a toroidal hexameric ring with the proposed subunit order MCM2-MCM6-MCM4-MCM7-MCM3-MCM5. Component of the CMG helicase complex, a hexameric ring of related MCM2-7 subunits stabilized by CDC45 and the tetrameric GINS complex. Associated with the replication-specific DNA polymerase alpha. Interacts with MCMBP. Interacts with ANKRD17. Interacts with MCM3AP isoform MCM3AP; this interaction leads to MCM3 acetylation. In terms of processing, acetylated by MCM3AP. O-glycosylated (O-GlcNAcylated), in a cell cycle-dependent manner.

The protein localises to the nucleus. Its subcellular location is the chromosome. It carries out the reaction ATP + H2O = ADP + phosphate + H(+). In terms of biological role, acts as a component of the MCM2-7 complex (MCM complex) which is the replicative helicase essential for 'once per cell cycle' DNA replication initiation and elongation in eukaryotic cells. Core component of CDC45-MCM-GINS (CMG) helicase, the molecular machine that unwinds template DNA during replication, and around which the replisome is built. The active ATPase sites in the MCM2-7 ring are formed through the interaction surfaces of two neighboring subunits such that a critical structure of a conserved arginine finger motif is provided in trans relative to the ATP-binding site of the Walker A box of the adjacent subunit. The six ATPase active sites, however, are likely to contribute differentially to the complex helicase activity. Required for the entry in S phase and for cell division. In Bos taurus (Bovine), this protein is DNA replication licensing factor MCM3 (MCM3).